The following is a 436-amino-acid chain: GTPase Der (436 aa).

2 consecutive EngA-type G domains span residues 4–167 (PVIA…PKIE) and 176–351 (IRFS…ESHS). GTP-binding positions include 10 to 17 (GRPNVGKS), 57 to 61 (DTGGI), 119 to 122 (NKVD), 182 to 189 (GRPNVGKS), 229 to 233 (DTAGM), and 294 to 297 (NKWD). Positions 352–436 (IRVQTNVLND…PIHIIARARD (85 aa)) constitute a KH-like domain.

Belongs to the TRAFAC class TrmE-Era-EngA-EngB-Septin-like GTPase superfamily. EngA (Der) GTPase family. Associates with the 50S ribosomal subunit.

Functionally, GTPase that plays an essential role in the late steps of ribosome biogenesis. This is GTPase Der from Bacillus mycoides (strain KBAB4) (Bacillus weihenstephanensis).